The following is a 440-amino-acid chain: MQQVITQTLVDDRFIQISDSKKSEGLATDSTKRQSQEQPIHDKDPIKAATAAMAATPLVKEHQDTWYYPPDIANDLQSINLPAELKGEIFACAWEYTRCVIPNYTNWNRYVAFMRIIIMGIIAEFRGEMVDVTASNNLLGYDLDATLAALFEGTPGHKEMAREYKTFLLITADKASERRDGELFRRYVNALAQSPRHWFRMRDCDALARFTIASALACNDLDDIWFTEDQFEILTEIGDTLYDAVAFYKHRAEGETNSTFAYMPEDLRIKAYSECREILWALDAAWARNPKLANVINFVRFFGGPIHMMMRRYRFVEENLTIGKSETDKVVDQTRKNFKLWNRVDANKRSVLNTQRYKALIARSEELMFPGLAEFLEMGGDGICDKCKYRESYGAELSHQFGGVELCSECRLSWRKYLECFVERATKVFPELKTHFEVPV.

The protein belongs to the alpha-ionylideneethane synthase family.

It functions in the pathway hormone biosynthesis. Functionally, alpha-ionylideneethane synthase; part of the gene cluster that mediates the biosynthesis of abscisic acid (ABA), a phytohormone that acts antagonistically toward salicylic acid (SA), jasmonic acid (JA) and ethylene (ETH) signaling, to impede plant defense responses. The first step of the pathway catalyzes the reaction from farnesyl diphosphate to alpha-ionylideneethane performed by the alpha-ionylideneethane synthase aba3 via a three-step reaction mechanism involving 2 neutral intermediates, beta-farnesene and allofarnesene. The cytochrome P450 monooxygenase aba1 might then be involved in the conversion of alpha-ionylideneethane to alpha-ionylideneacetic acid. Alpha-ionylideneacetic acid is further converted to abscisic acid in 2 steps involving the cytochrome P450 monooxygenase aba2 and the short-chain dehydrogenase/reductase aba4, via the intermediates 1'-deoxy-ABA or 1',4'-trans-diol-ABA, depending on the order of action of these 2 enzymes. Aba2 is responsible for the hydroxylation of carbon atom C-1' and aba4 might be involved in the oxidation of the C-4' carbon atom. This chain is Alpha-ionylideneethane synthase aba3, found in Botryotinia fuckeliana (strain B05.10) (Noble rot fungus).